Reading from the N-terminus, the 179-residue chain is Dual-action ribosomal maturation protein DarP (179 aa).

The protein belongs to the DarP family.

The protein resides in the cytoplasm. Its function is as follows. Member of a network of 50S ribosomal subunit biogenesis factors which assembles along the 30S-50S interface, preventing incorrect 23S rRNA structures from forming. Promotes peptidyl transferase center (PTC) maturation. In Aliivibrio fischeri (strain ATCC 700601 / ES114) (Vibrio fischeri), this protein is Dual-action ribosomal maturation protein DarP.